The following is a 772-amino-acid chain: Ribosomal protein S6 kinase alpha-4 (772 aa).

Residues 33–301 (FELLKVLGTG…AQEVRNHPFF (269 aa)) enclose the Protein kinase 1 domain. ATP is bound by residues 39–47 (LGTGAYGKV) and K65. D161 acts as the Proton acceptor in catalysis. S196 bears the Phosphoserine; by autocatalysis mark. An AGC-kinase C-terminal domain is found at 302–371 (QGLDWVALAA…VAPSILFDHN (70 aa)). Residue S343 is modified to Phosphoserine; by MAPK1, MAPK3 and MAPK14. At S347 the chain carries Phosphoserine. Phosphoserine; by autocatalysis is present on residues S360 and S365. A Protein kinase 2 domain is found at 411–674 (DLREPALGQG…LEGLRGSSWL (264 aa)). ATP-binding positions include 417–425 (LGQGSFSVC) and K440. The Proton acceptor role is filled by D530. The residue at position 542 (T542) is a Phosphothreonine. Phosphothreonine; by MAPK1, MAPK3 and MAPK14 is present on T568. A phosphoserine mark is found at S634 and S678. Disordered stretches follow at residues 673-696 (WLQDGSARSSPPLRTPDVLESSGP) and 728-772 (AKRR…LPPS). Position 687 is a phosphothreonine (T687). The interval 725 to 772 (APLAKRRKQKLRSATASRRGSPAPANPGRAPVASKGAPRRANGPLPPS) is required for nuclear targeting and association with MAPK14. S737 is subject to Phosphoserine; by autocatalysis. S745 bears the Phosphoserine mark.

The protein belongs to the protein kinase superfamily. AGC Ser/Thr protein kinase family. S6 kinase subfamily. Forms a complex with either MAPK1/ERK2 or MAPK3/ERK1 in quiescent cells which transiently dissociates following mitogenic stimulation. Also associates with MAPK14/p38-alpha. Activated RPS6KA4 associates with and phosphorylates the NF-kappa-B p65 subunit RELA. The cofactor is Mg(2+). Ser-343 and Thr-568 phosphorylation is required for kinase activity. Ser-343 and Ser-196 are autophosphorylated by the C-terminal kinase domain, and their phosphorylation is essential for the catalytic activity of the N-terminal kinase domain. Phosphorylated at Ser-343, Thr-568 and Thr-687 by MAPK1/ERK2, MAPK3/ERK1 and MAPK14/p38-alpha. Autophosphorylated at Ser-737 and Ser-745 by the N-terminal kinase domain.

Its subcellular location is the nucleus. It catalyses the reaction L-seryl-[protein] + ATP = O-phospho-L-seryl-[protein] + ADP + H(+). It carries out the reaction L-threonyl-[protein] + ATP = O-phospho-L-threonyl-[protein] + ADP + H(+). Its activity is regulated as follows. Activated by phosphorylation at Ser-343, Thr-568 and Thr-687 by MAPK1/ERK2, MAPK3/ERK1 and MAPK14/p38-alpha, and by further autophosphorylation of Ser-196, Ser-360 and Ser-365 by the activated C-terminal kinase domain. Functionally, serine/threonine-protein kinase that is required for the mitogen or stress-induced phosphorylation of the transcription factors CREB1 and ATF1 and for the regulation of the transcription factor RELA, and that contributes to gene activation by histone phosphorylation and functions in the regulation of inflammatory genes. Phosphorylates CREB1 and ATF1 in response to mitogenic or stress stimuli such as UV-C irradiation, epidermal growth factor (EGF) and anisomycin. Plays an essential role in the control of RELA transcriptional activity in response to TNF. Phosphorylates 'Ser-10' of histone H3 in response to mitogenics, stress stimuli and EGF, which results in the transcriptional activation of several immediate early genes, including proto-oncogenes c-fos/FOS and c-jun/JUN. May also phosphorylate 'Ser-28' of histone H3. Mediates the mitogen- and stress-induced phosphorylation of high mobility group protein 1 (HMGN1/HMG14). In lipopolysaccharide-stimulated primary macrophages, acts downstream of the Toll-like receptor TLR4 to limit the production of pro-inflammatory cytokines. Functions probably by inducing transcription of the MAP kinase phosphatase DUSP1 and the anti-inflammatory cytokine interleukin 10 (IL10), via CREB1 and ATF1 transcription factors. The chain is Ribosomal protein S6 kinase alpha-4 (RPS6KA4) from Homo sapiens (Human).